Consider the following 100-residue polypeptide: MICOS complex subunit MIC12 (100 aa).

A helical transmembrane segment spans residues 10 to 26; it reads FATISSVAAASLYLYAI.

It belongs to the MICOS complex subunit Mic12 family. Component of the mitochondrial contact site and cristae organizing system (MICOS) complex.

It localises to the mitochondrion inner membrane. In terms of biological role, component of the MICOS complex, a large protein complex of the mitochondrial inner membrane that plays crucial roles in the maintenance of crista junctions, inner membrane architecture, and formation of contact sites to the outer membrane. This chain is MICOS complex subunit MIC12 (AIM5), found in Vanderwaltozyma polyspora (strain ATCC 22028 / DSM 70294 / BCRC 21397 / CBS 2163 / NBRC 10782 / NRRL Y-8283 / UCD 57-17) (Kluyveromyces polysporus).